The following is a 235-amino-acid chain: Small ribosomal subunit protein eS4 (235 aa).

Positions 43-114 (IPLLLIVRDM…DPHRFLRLIE (72 aa)) constitute an S4 RNA-binding domain.

It belongs to the eukaryotic ribosomal protein eS4 family.

This is Small ribosomal subunit protein eS4 from Korarchaeum cryptofilum (strain OPF8).